The sequence spans 817 residues: Neurabin-2 (817 aa).

2 actin-binding regions span residues 1–154 (MMKT…FERS) and 164–283 (EAAA…QHRV). Residues 1 to 165 (MMKTEPRGPG…PAAAGGDKEA (165 aa)) form a disordered region. Residues serine 15 and serine 17 each carry the phosphoserine modification. Residues 44–58 (GAHHKKYGSNVHRIK) are compositionally biased toward basic residues. Phosphoserine is present on residues serine 94, serine 100, and serine 116. The interval 100 to 371 (SLNENVDHSA…PERGVGNGRA (272 aa)) is interaction with D(2) dopamine receptor. Positions 131-141 (SAQPAPPPHPP) are enriched in pro residues. The tract at residues 169 to 255 (RLLRQERAGL…KRSRVFQPPP (87 aa)) is interaction with ADRA2A, ADRA2B and ADRA2C. The residue at position 192 (serine 192) is a Phosphoserine. At threonine 193 the chain carries Phosphothreonine. Serine 205 bears the Phosphoserine mark. Position 207 is a phosphothreonine (threonine 207). A disordered region spans residues 216-447 (EKADSRTGLH…SEEEDPAPSR (232 aa)). Over residues 252–261 (QPPPPPPPAP) the composition is skewed to pro residues. Positions 291–302 (KPREVRKIKPVE) are enriched in basic and acidic residues. A compositionally biased stretch (low complexity) spans 333 to 342 (STVATAASPA). Positions 344 to 356 (EEPKAQAAPEKEA) are enriched in basic and acidic residues. Positions 410-425 (LEEDDEDDEEDGEPPY) are enriched in acidic residues. The interval 417 to 494 (DEEDGEPPYE…LEKRVERLEL (78 aa)) is interaction with protein phosphatase 1. A Phosphoserine modification is found at serine 438. A PP1-binding motif motif is present at residues 447-451 (RKIHF). Residues 480-525 (SAEYELEKRVERLELFPVELEKDSEGLGISIIGMGAGADMGLEKLG) form an interaction with RGS2 region. One can recognise a PDZ domain in the interval 496–584 (PVELEKDSEG…RVRFMIGRER (89 aa)). The tract at residues 595 to 816 (IQQTLEQERW…NLQTLRNSNS (222 aa)) is interaction with TGN38. Serine 658 is subject to Phosphoserine. A coiled-coil region spans residues 671-788 (FKELQIKHAV…QRRVLEESEL (118 aa)).

Interacts with DCLK2. Possibly exists as a homodimer, homotrimer or a homotetramer. Interacts with F-actin, PPP1CA, neurabin-1, TGN38 and D(2) dopamine receptor. Interacts with RGS1, RGS2, RGS4, RGS19 and ADRA1B, ADRA2A, ADRA2B, ADRA2C, CDKN2A, PPP1R2, RASGFR1 and TIAM1. Interacts (via C-terminus) with SPATA13 (via C-terminal tail). Interacts with ADRA2B. In terms of processing, stimulation of D1 (but not D2) dopamine receptors induces Ser-94 phosphorylation. Dephosphorylation of Ser-94 is mediated mainly by PP1 and to a lesser extent by PP2A. Phosphorylation of spinophilin disrupts its association with F-actin, but does not affect its binding to PP1.

It is found in the cytoplasm. The protein resides in the cytoskeleton. It localises to the nucleus. The protein localises to the cell projection. Its subcellular location is the dendritic spine. It is found in the postsynaptic density. The protein resides in the synapse. It localises to the cell junction. The protein localises to the adherens junction. Its subcellular location is the cell membrane. It is found in the lamellipodium. The protein resides in the filopodium. It localises to the ruffle membrane. Functionally, seems to act as a scaffold protein in multiple signaling pathways. Modulates excitatory synaptic transmission and dendritic spine morphology. Binds to actin filaments (F-actin) and shows cross-linking activity. Binds along the sides of the F-actin. May play an important role in linking the actin cytoskeleton to the plasma membrane at the synaptic junction. Believed to target protein phosphatase 1/PP1 to dendritic spines, which are rich in F-actin, and regulates its specificity toward ion channels and other substrates, such as AMPA-type and NMDA-type glutamate receptors. Plays a role in regulation of G-protein coupled receptor signaling, including dopamine D2 receptors and alpha-adrenergic receptors. May establish a signaling complex for dopaminergic neurotransmission through D2 receptors by linking receptors downstream signaling molecules and the actin cytoskeleton. Binds to ADRA1B and RGS2 and mediates regulation of ADRA1B signaling. May confer to Rac signaling specificity by binding to both, RacGEFs and Rac effector proteins. Probably regulates p70 S6 kinase activity by forming a complex with TIAM1. Required for hepatocyte growth factor (HGF)-induced cell migration. This is Neurabin-2 (PPP1R9B) from Homo sapiens (Human).